A 1901-amino-acid chain; its full sequence is Methylcytosine dioxygenase tet3 (1901 aa).

A CXXC-type zinc finger spans residues 58–99; it reads SNKKRKRCGVCVPCLRKEPCGACYNCVNRSTSHQICKMRKCE. Cysteine 65, cysteine 68, cysteine 71, cysteine 77, cysteine 80, cysteine 83, cysteine 93, and cysteine 98 together coordinate Zn(2+). Disordered stretches follow at residues 434 to 455, 602 to 658, 751 to 787, and 808 to 867; these read KNALPVPQSPRQTSWEQNKKSS, WWVP…EGSA, KDQCPTPSTHDTSSSSGQGDSANQHTNVSDVPGQNDL, and DFSL…PVSR. 2 stretches are compositionally biased toward polar residues: residues 442–455 and 602–614; these read SPRQTSWEQNKKSS and WWVPSSQQAPVSK. A compositionally biased stretch (basic residues) spans 640–652; sequence KPQRKQVQIKKPK. Residues 758-771 show a composition bias toward low complexity; it reads STHDTSSSSGQGDS. Polar residues predominate over residues 847–867; sequence ENSTKPATHSNPALSNNPVSR. Residues cysteine 957, cysteine 959, cysteine 1017, histidine 1043, and cysteine 1045 each coordinate Zn(2+). Arginine 1085 provides a ligand contact to 2-oxoglutarate. 5 residues coordinate Zn(2+): cysteine 1095, cysteine 1097, cysteine 1113, cysteine 1122, and cysteine 1182. Cysteine 1198 is a 2-oxoglutarate binding site. Histidine 1204 contributes to the Zn(2+) binding site. The Fe cation site is built by histidine 1206 and aspartate 1208. Position 1240 (histidine 1240) interacts with 2-oxoglutarate. Disordered regions lie at residues 1282-1338, 1457-1501, 1591-1624, and 1680-1745; these read SEPA…QQTK, YGSE…VETT, SNAPGLKDKQWPPYGTDVSVRQHDSLDSQSPGKV, and SATP…DEEI. The span at 1291–1325 shows a compositional bias: basic and acidic residues; sequence RQLEAKKAAAEKKKLQKEKLVSPDKTKQEPSDKKT. Positions 1326–1338 are enriched in polar residues; it reads CQQNPGVPQQQTK. A compositionally biased stretch (basic and acidic residues) spans 1465–1474; it reads SFRRSSEVPH. Residues 1477–1487 show a composition bias toward polar residues; that stretch reads SLQNPSSQKSV. 2 stretches are compositionally biased toward polar residues: residues 1680–1693 and 1702–1719; these read SATPSDRSSITPCS and SFPNPTVNSLKTDSSQNH. Histidine 1780 provides a ligand contact to Fe cation. Residue 1795 to 1797 coordinates 2-oxoglutarate; the sequence is RIS.

Belongs to the TET family. It depends on Fe(2+) as a cofactor. Zn(2+) serves as cofactor.

It is found in the nucleus. Its subcellular location is the chromosome. It catalyses the reaction a 5-methyl-2'-deoxycytidine in DNA + 2-oxoglutarate + O2 = a 5-hydroxymethyl-2'-deoxycytidine in DNA + succinate + CO2. It carries out the reaction a 5-hydroxymethyl-2'-deoxycytidine in DNA + 2-oxoglutarate + O2 = a 5-formyl-2'-deoxycytidine in DNA + succinate + CO2 + H2O. The enzyme catalyses a 5-formyl-2'-deoxycytidine in DNA + 2-oxoglutarate + O2 = a 5-carboxyl-2'-deoxycytidine in DNA + succinate + CO2 + H(+). In terms of biological role, dioxygenase that catalyzes the conversion of the modified genomic base 5-methylcytosine (5mC) into 5-hydroxymethylcytosine (5hmC) and plays a key role in epigenetic chromatin reprogramming during embryonic development. Conversion of 5mC into 5hmC probably constitutes the first step in cytosine demethylation. Selectively binds to the promoter region of target genes and contributes to regulate the expression of numerous developmental genes, including pax6, rax, sox9 and six3. May also contribute to the regulation of target genes in ways that do not require its enzyme activity. The sequence is that of Methylcytosine dioxygenase tet3 from Xenopus tropicalis (Western clawed frog).